A 284-amino-acid polypeptide reads, in one-letter code: Averufin oxidase A (284 aa).

Positions 1–23 (MPTYALLGATGATGSAILRCLLA) are cleaved as a signal peptide. Residues asparagine 62, asparagine 86, and asparagine 190 are each glycosylated (N-linked (GlcNAc...) asparagine).

The protein belongs to the avfA family.

It functions in the pathway mycotoxin biosynthesis. Averufin oxidase A; part of the fragmented gene cluster that mediates the biosynthesis of dothistromin (DOTH), a polyketide toxin very similar in structure to the aflatoxin precursor, versicolorin B. The first step of the pathway is the conversion of acetate to norsolorinic acid (NOR) and requires the fatty acid synthase subunits hexA and hexB, as well as the polyketide synthase pksA. PksA combines a hexanoyl starter unit and 7 malonyl-CoA extender units to synthesize the precursor NOR. The hexanoyl starter unit is provided to the acyl-carrier protein (ACP) domain by the fungal fatty acid synthase hexA/hexB. The second step is the conversion of NOR to averantin (AVN) and requires the norsolorinic acid ketoreductase nor1, which catalyzes the dehydration of norsolorinic acid to form (1'S)-averantin. The cytochrome P450 monooxygenase avnA then catalyzes the hydroxylation of AVN to 5'hydroxyaverantin (HAVN). The next step is performed by adhA that transforms HAVN to averufin (AVF). Averufin might then be converted to hydroxyversicolorone by cypX and avfA. Hydroxyversicolorone is further converted versiconal hemiacetal acetate (VHA) by moxY. VHA is then the substrate for the versiconal hemiacetal acetate esterase est1 to yield versiconal (VAL). Versicolorin B synthase vbsA then converts VAL to versicolorin B (VERB) by closing the bisfuran ring. Then, the activity of the versicolorin B desaturase verB leads to versicolorin A (VERA). DotB, a predicted chloroperoxidase, may perform epoxidation of the A-ring of VERA. Alternatively, a cytochrome P450, such as cypX or avnA could catalyze this step. It is also possible that another, uncharacterized, cytochrome P450 enzyme is responsible for this step. Opening of the epoxide could potentially be achieved by the epoxide hydrolase epoA. However, epoA seems not to be required for DOTH biosynthesis, but other epoxide hydrolases may have the ability to complement this hydrolysis. Alternatively, opening of the epoxide ring could be achieved non-enzymatically. The next step is the deoxygenation of ring A to yield the 5,8-dihydroxyanthraquinone which is most likely catalyzed by the NADPH dehydrogenase encoded by ver1. The last stages of DOTH biosynthesis are proposed to involve hydroxylation of the bisfuran. OrdB and norB might have oxidative roles here. An alternative possibility is that cytochrome P450 monoogenases such as avnA and cypX might perform these steps in addition to previously proposed steps. The chain is Averufin oxidase A from Dothistroma septosporum (strain NZE10 / CBS 128990) (Red band needle blight fungus).